Here is a 317-residue protein sequence, read N- to C-terminus: MTPALKSTFVLAHRHLLGIEGLSAADITGLLDLSEEYVELNRQVDKKRASLRGRTQVNLFFEASTRTQSSFEIAGKRLGADVMNMSVSSSSMRKGETLMDTAVTLNAMHPDILVVRHHASGAVELLARKVDGSVINAGDGAHEHPTQALLDALTIRRNKGRLEGLVVAICGDVMHSRVARSNILLLNTMGARVRVVAPSTLLPRGIERMGVEVARDMREGLDGADIVMMLRLQRERMNGSFVPSSQEYFHYFGLDQKKLAYAKPDALVMHPGPMNRGVEIDSIVADGAQSVIREQVEMGVAVRMAVLEALARNLPNA.

2 residues coordinate carbamoyl phosphate: Arg-66 and Thr-67. Residue Lys-94 coordinates L-aspartate. 3 residues coordinate carbamoyl phosphate: Arg-116, His-144, and Gln-147. L-aspartate-binding residues include Arg-177 and Arg-231. 2 residues coordinate carbamoyl phosphate: Gly-272 and Pro-273.

This sequence belongs to the aspartate/ornithine carbamoyltransferase superfamily. ATCase family. Heterododecamer (2C3:3R2) of six catalytic PyrB chains organized as two trimers (C3), and six regulatory PyrI chains organized as three dimers (R2).

It carries out the reaction carbamoyl phosphate + L-aspartate = N-carbamoyl-L-aspartate + phosphate + H(+). It participates in pyrimidine metabolism; UMP biosynthesis via de novo pathway; (S)-dihydroorotate from bicarbonate: step 2/3. Functionally, catalyzes the condensation of carbamoyl phosphate and aspartate to form carbamoyl aspartate and inorganic phosphate, the committed step in the de novo pyrimidine nucleotide biosynthesis pathway. The sequence is that of Aspartate carbamoyltransferase catalytic subunit from Rhodopseudomonas palustris (strain BisB5).